The sequence spans 83 residues: Small ribosomal subunit protein bS16 (83 aa).

The protein belongs to the bacterial ribosomal protein bS16 family.

The chain is Small ribosomal subunit protein bS16 from Azotobacter vinelandii (strain DJ / ATCC BAA-1303).